The sequence spans 367 residues: Alpha-2-HS-glycoprotein (367 aa).

Residues 1–18 (MKSLVLLLCLAQLWGCHS) form the signal peptide. The 107-residue stretch at 27–133 (YRQPNCDDPE…KFSVVYAKCD (107 aa)) folds into the Cystatin fetuin-A-type 1 domain. 6 cysteine pairs are disulfide-bonded: Cys32-Cys358, Cys89-Cys100, Cys114-Cys132, Cys146-Cys149, Cys208-Cys219, and Cys230-Cys247. 3 positions are modified to phosphoserine: Ser134, Ser135, and Ser138. The Cystatin fetuin-A-type 2 domain maps to 144–255 (KVCQDCPLLA…TCTVFQTQPV (112 aa)). N-linked (GlcNAc...) asparagine glycosylation is found at Asn156 and Asn176. The interval 254 to 301 (PVTSQPQPEGANETVPTPVVDPDAPPSPPLGAPGLPPAGSPPDSHVLL) is disordered. An N-linked (GlcNAc...) asparagine glycan is attached at Asn265. Positions 276-293 (DAPPSPPLGAPGLPPAGS) are enriched in pro residues. Residues 301–340 (LAAPPGHQLHWAHYDLRHTFMGVVSLGSPSGEASHPRKTR) constitute a propeptide, connecting peptide. Position 319 is a phosphothreonine (Thr319). Phosphoserine is present on residues Ser325, Ser328, and Ser330. Residue Thr339 is glycosylated (O-linked (GalNAc...) threonine).

This sequence belongs to the fetuin family. Alpha-2-HS glycoprotein derives from this precursor, when the connecting peptide is cleaved off. The two chains A and B are held together by a single disulfide bond. Phosphorylated by FAM20C in the extracellular medium.

It is found in the secreted. Its function is as follows. Promotes endocytosis, possesses opsonic properties and influences the mineral phase of bone. Shows affinity for calcium and barium ions. The protein is Alpha-2-HS-glycoprotein (AHSG) of Pan troglodytes (Chimpanzee).